Consider the following 559-residue polypeptide: Potassium-transporting ATPase potassium-binding subunit (559 aa).

A run of 13 helical transmembrane segments spans residues 5–25 (GFLL…PLGS), 27–47 (LARL…RILW), 63–83 (LLAL…LLFW), 132–152 (GLTV…FALI), 170–190 (LVRI…LFFI), 253–273 (LAQM…FGEA), 283–303 (LLWA…WAEV), 327–347 (FGVL…CGAV), 356–376 (ALGG…FGGV), 379–399 (GLYG…LMIG), 416–436 (MTAL…ALAM), 484–504 (LLAF…MAIA), and 524–544 (GALF…LTFI).

It belongs to the KdpA family. The system is composed of three essential subunits: KdpA, KdpB and KdpC.

Its subcellular location is the cell inner membrane. Part of the high-affinity ATP-driven potassium transport (or Kdp) system, which catalyzes the hydrolysis of ATP coupled with the electrogenic transport of potassium into the cytoplasm. This subunit binds the periplasmic potassium ions and delivers the ions to the membrane domain of KdpB through an intramembrane tunnel. The polypeptide is Potassium-transporting ATPase potassium-binding subunit (Salmonella dublin (strain CT_02021853)).